We begin with the raw amino-acid sequence, 126 residues long: Small ribosomal subunit protein uS12 (126 aa).

3-methylthioaspartic acid is present on D89.

Belongs to the universal ribosomal protein uS12 family. In terms of assembly, part of the 30S ribosomal subunit. Contacts proteins S8 and S17. May interact with IF1 in the 30S initiation complex.

Its function is as follows. With S4 and S5 plays an important role in translational accuracy. Functionally, interacts with and stabilizes bases of the 16S rRNA that are involved in tRNA selection in the A site and with the mRNA backbone. Located at the interface of the 30S and 50S subunits, it traverses the body of the 30S subunit contacting proteins on the other side and probably holding the rRNA structure together. The combined cluster of proteins S8, S12 and S17 appears to hold together the shoulder and platform of the 30S subunit. The polypeptide is Small ribosomal subunit protein uS12 (Sulfurimonas denitrificans (strain ATCC 33889 / DSM 1251) (Thiomicrospira denitrificans (strain ATCC 33889 / DSM 1251))).